Consider the following 586-residue polypeptide: Probable zinc metalloprotease EGY3, chloroplastic (586 aa).

A chloroplast-targeting transit peptide spans 1 to 54 (MASSSLVTSLLFSSSSSSNTATSTSSRRSFSLFSKNQYCKPRPLRRSSSRLLVR). Disordered stretches follow at residues 13-32 (SSSS…SFSL) and 58-122 (QQQQ…DWRS). Residues 61–73 (QEEKAAPAAESHH) show a composition bias toward basic and acidic residues. A coiled-coil region spans residues 103–195 (VKKSKEELEE…NTFKALDLNK (93 aa)). The next 7 helical transmembrane spans lie at 287-307 (LSAV…SGFF), 318-338 (VSDV…SEIA), 389-409 (ASAY…DGSL), 427-447 (PLLS…GNVL), 454-474 (VGVP…VTSL), 506-526 (VALG…WGLF), and 550-570 (YAWG…NGGG).

The protein belongs to the peptidase M50B family.

It is found in the plastid. Its subcellular location is the chloroplast membrane. Functionally, probable membrane-associated metalloprotease that may be involved in chloroplast development. This is Probable zinc metalloprotease EGY3, chloroplastic (EGY3) from Oryza sativa subsp. japonica (Rice).